Here is a 482-residue protein sequence, read N- to C-terminus: Glutamyl-tRNA(Gln) amidotransferase subunit A (482 aa).

Active-site charge relay system residues include Lys-75 and Ser-150. Ser-174 serves as the catalytic Acyl-ester intermediate.

Belongs to the amidase family. GatA subfamily. As to quaternary structure, heterotrimer of A, B and C subunits.

It carries out the reaction L-glutamyl-tRNA(Gln) + L-glutamine + ATP + H2O = L-glutaminyl-tRNA(Gln) + L-glutamate + ADP + phosphate + H(+). In terms of biological role, allows the formation of correctly charged Gln-tRNA(Gln) through the transamidation of misacylated Glu-tRNA(Gln) in organisms which lack glutaminyl-tRNA synthetase. The reaction takes place in the presence of glutamine and ATP through an activated gamma-phospho-Glu-tRNA(Gln). The chain is Glutamyl-tRNA(Gln) amidotransferase subunit A from Thermosynechococcus vestitus (strain NIES-2133 / IAM M-273 / BP-1).